The sequence spans 258 residues: HVA22-like protein j (258 aa).

Residues 153-258 (AANQPPTERN…RSNSRTQPAA (106 aa)) are disordered. The span at 156–169 (QPPTERNVNMNAQS) shows a compositional bias: polar residues. A compositionally biased stretch (pro residues) spans 206–215 (WPPPTPPPTP).

This sequence belongs to the DP1 family.

The sequence is that of HVA22-like protein j (HVA22J) from Arabidopsis thaliana (Mouse-ear cress).